Here is a 440-residue protein sequence, read N- to C-terminus: Tol-Pal system protein TolB (440 aa).

The N-terminal stretch at 1–21 (MKIFGKWLLVTLLICSMPVKA) is a signal peptide.

Belongs to the TolB family. The Tol-Pal system is composed of five core proteins: the inner membrane proteins TolA, TolQ and TolR, the periplasmic protein TolB and the outer membrane protein Pal. They form a network linking the inner and outer membranes and the peptidoglycan layer.

It is found in the periplasm. In terms of biological role, part of the Tol-Pal system, which plays a role in outer membrane invagination during cell division and is important for maintaining outer membrane integrity. The chain is Tol-Pal system protein TolB from Shewanella halifaxensis (strain HAW-EB4).